The primary structure comprises 306 residues: CRISPR-associated endonuclease Cas1 (306 aa).

Mn(2+) is bound by residues Glu-143, His-210, and Asp-223.

Belongs to the CRISPR-associated endonuclease Cas1 family. In terms of assembly, homodimer, forms a heterotetramer with a Cas2 homodimer. Mg(2+) serves as cofactor. Mn(2+) is required as a cofactor.

Functionally, CRISPR (clustered regularly interspaced short palindromic repeat), is an adaptive immune system that provides protection against mobile genetic elements (viruses, transposable elements and conjugative plasmids). CRISPR clusters contain spacers, sequences complementary to antecedent mobile elements, and target invading nucleic acids. CRISPR clusters are transcribed and processed into CRISPR RNA (crRNA). Acts as a dsDNA endonuclease. Involved in the integration of spacer DNA into the CRISPR cassette. This chain is CRISPR-associated endonuclease Cas1, found in Geobacter sulfurreducens (strain ATCC 51573 / DSM 12127 / PCA).